Here is a 120-residue protein sequence, read N- to C-terminus: Large ribosomal subunit protein uL18 (120 aa).

The protein belongs to the universal ribosomal protein uL18 family. In terms of assembly, part of the 50S ribosomal subunit; part of the 5S rRNA/L5/L18/L25 subcomplex. Contacts the 5S and 23S rRNAs.

Functionally, this is one of the proteins that bind and probably mediate the attachment of the 5S RNA into the large ribosomal subunit, where it forms part of the central protuberance. The polypeptide is Large ribosomal subunit protein uL18 (Beijerinckia indica subsp. indica (strain ATCC 9039 / DSM 1715 / NCIMB 8712)).